The primary structure comprises 302 residues: Succinate--CoA ligase [ADP-forming] subunit alpha (302 aa).

Residues 17–20 (TGST), Lys-43, and 96–98 (ITE) contribute to the CoA site. Tyr-159 is a substrate binding site. Residue His-247 is the Tele-phosphohistidine intermediate of the active site.

It belongs to the succinate/malate CoA ligase alpha subunit family. As to quaternary structure, heterotetramer of two alpha and two beta subunits.

It catalyses the reaction succinate + ATP + CoA = succinyl-CoA + ADP + phosphate. It carries out the reaction GTP + succinate + CoA = succinyl-CoA + GDP + phosphate. It participates in carbohydrate metabolism; tricarboxylic acid cycle; succinate from succinyl-CoA (ligase route): step 1/1. Succinyl-CoA synthetase functions in the citric acid cycle (TCA), coupling the hydrolysis of succinyl-CoA to the synthesis of either ATP or GTP and thus represents the only step of substrate-level phosphorylation in the TCA. The alpha subunit of the enzyme binds the substrates coenzyme A and phosphate, while succinate binding and nucleotide specificity is provided by the beta subunit. The chain is Succinate--CoA ligase [ADP-forming] subunit alpha from Staphylococcus aureus (strain MSSA476).